The following is a 147-amino-acid chain: Large ribosomal subunit protein bL9 (147 aa).

Belongs to the bacterial ribosomal protein bL9 family.

Its function is as follows. Binds to the 23S rRNA. This Cytophaga hutchinsonii (strain ATCC 33406 / DSM 1761 / CIP 103989 / NBRC 15051 / NCIMB 9469 / D465) protein is Large ribosomal subunit protein bL9.